A 223-amino-acid polypeptide reads, in one-letter code: Ribose-5-phosphate isomerase A (223 aa).

Substrate contacts are provided by residues Thr-26–Thr-29, Asp-82–Asp-85, and Lys-95–Gly-98. The Proton acceptor role is filled by Glu-104. Residue Lys-122 coordinates substrate.

This sequence belongs to the ribose 5-phosphate isomerase family. Homodimer.

The catalysed reaction is aldehydo-D-ribose 5-phosphate = D-ribulose 5-phosphate. It functions in the pathway carbohydrate degradation; pentose phosphate pathway; D-ribose 5-phosphate from D-ribulose 5-phosphate (non-oxidative stage): step 1/1. In terms of biological role, catalyzes the reversible conversion of ribose-5-phosphate to ribulose 5-phosphate. In Streptococcus agalactiae serotype Ia (strain ATCC 27591 / A909 / CDC SS700), this protein is Ribose-5-phosphate isomerase A.